Here is a 329-residue protein sequence, read N- to C-terminus: Protein Brevis radix-like 4 (329 aa).

The interval 12–37 (SGTSRHHGQQRRGGSPPPRGRTTSVY) is disordered. A BRX 1 domain is found at 86–142 (REWVAQVEPGVQITFVSLAGGGGNDLKRIRFSREMYDKWQAQKWWGENNERIMELYN). The tract at residues 151–263 (LPTPPRSDDG…TTSCSSRDEV (113 aa)) is disordered. Composition is skewed to low complexity over residues 222-236 (SNPS…QQPQ) and 243-252 (AAASDAMDAA). A compositionally biased stretch (polar residues) spans 253-263 (RTTSCSSRDEV). Positions 274–329 (TEWVIQDEPGVYITVRELADGTRELRRVRFSRERFAELNAKLWWEENKERIQAQYL) constitute a BRX 2 domain.

This sequence belongs to the BRX family.

It localises to the nucleus. This chain is Protein Brevis radix-like 4 (BRXL4), found in Oryza sativa subsp. japonica (Rice).